The primary structure comprises 417 residues: Serine protease hepsin (417 aa).

Topologically, residues 1 to 23 (MAQKEGGRTVPCCSRPKVAALTA) are cytoplasmic. The helical; Signal-anchor for type II membrane protein transmembrane segment at 24–44 (GTLLLLTAIGAASWAIVAVLL) threads the bilayer. At 45–417 (RSDQEPLYPV…SEASGMVTQL (373 aa)) the chain is on the extracellular side. The region spanning 54 to 151 (VQVSSADARL…RGRFLAAICQ (98 aa)) is the SRCR domain. 8 cysteine pairs are disulfide-bonded: Cys-77–Cys-140, Cys-90–Cys-150, Cys-119–Cys-138, Cys-153–Cys-277, Cys-188–Cys-204, Cys-291–Cys-359, Cys-322–Cys-338, and Cys-349–Cys-381. N-linked (GlcNAc...) asparagine glycosylation occurs at Asn-112. The Peptidase S1 domain occupies 163–405 (IVGGRDTSLG…FREWIFQAIK (243 aa)). Catalysis depends on charge relay system residues His-203 and Asp-257. Ser-353 (charge relay system) is an active-site residue.

Belongs to the peptidase S1 family. Detected in liver and kidney.

It localises to the cell membrane. The protein localises to the apical cell membrane. The catalysed reaction is Cleavage after basic amino-acid residues, with Arg strongly preferred to Lys.. Functionally, serine protease that cleaves extracellular substrates, and contributes to the proteolytic processing of growth factors, such as HGF and MST1/HGFL. Plays a role in cell growth and maintenance of cell morphology. Plays a role in the proteolytic processing of ACE2. Mediates the proteolytic cleavage of urinary UMOD that is required for UMOD polymerization. This chain is Serine protease hepsin (HPN), found in Homo sapiens (Human).